The chain runs to 445 residues: Methionine aminopeptidase 2-3 (445 aa).

Residues 14 to 115 are disordered; it reads ISDADANGAD…ENRYRTTSEE (102 aa). The span at 38-47 shows a compositional bias: acidic residues; that stretch reads EDDDSDDDVA. Basic residues predominate over residues 60–75; it reads AKKKKNKKRKPKKKQP. A compositionally biased stretch (polar residues) spans 85 to 95; the sequence is PLSQLFPNNTY. Residues 97–115 show a composition bias toward basic and acidic residues; sequence KGEEVEYKDENRYRTTSEE. H198 serves as a coordination point for substrate. The a divalent metal cation site is built by D218, D229, and H298. Substrate is bound at residue H306. Residues E331 and E426 each contribute to the a divalent metal cation site.

This sequence belongs to the peptidase M24A family. Methionine aminopeptidase eukaryotic type 2 subfamily. Requires Co(2+) as cofactor. Zn(2+) is required as a cofactor. It depends on Mn(2+) as a cofactor. Fe(2+) serves as cofactor.

The protein resides in the cytoplasm. It carries out the reaction Release of N-terminal amino acids, preferentially methionine, from peptides and arylamides.. In terms of biological role, cotranslationally removes the N-terminal methionine from nascent proteins. The N-terminal methionine is often cleaved when the second residue in the primary sequence is small and uncharged (Met-Ala-, Cys, Gly, Pro, Ser, Thr, or Val). The polypeptide is Methionine aminopeptidase 2-3 (Neosartorya fischeri (strain ATCC 1020 / DSM 3700 / CBS 544.65 / FGSC A1164 / JCM 1740 / NRRL 181 / WB 181) (Aspergillus fischerianus)).